The following is a 244-amino-acid chain: Capsid protein (244 aa).

The Bipartite nuclear localization signal signature appears at 1 to 24 (MSTSKRKRADEAQWNKRSTKKKGS). Residues 1–39 (MSTSKRKRADEAQWNKRSTKKKGSAPQAKKPGGKVEKPS) are disordered.

It belongs to the geminiviridae capsid protein family. In terms of assembly, homomultimer. Interacts with the movement protein. Binds to single-stranded and double-stranded viral DNA.

Its subcellular location is the virion. The protein localises to the host nucleus. Its function is as follows. Encapsidates the viral genome into characteristic twinned ('geminate') particles. Binds the genomic viral ssDNA and shuttles it into and out of the cell nucleus. Plays a role in protection of the genome from degradation, virus acquisition and transmission by insect vectors, infectivity, and systemic movement. The CP of monopartite geminiviruses is absolutely essential for virus movement. The sequence is that of Capsid protein from Avena sativa (Oat).